Consider the following 352-residue polypeptide: Glycerol-3-phosphate dehydrogenase 1-like protein (352 aa).

13–18 (GSGNWG) provides a ligand contact to NAD(+). Residue Lys123 coordinates substrate. Ala156 lines the NAD(+) pocket. Lys207 functions as the Proton acceptor in the catalytic mechanism. Positions 272, 299, and 301 each coordinate NAD(+). 272–273 (RN) contributes to the substrate binding site.

It belongs to the NAD-dependent glycerol-3-phosphate dehydrogenase family.

It is found in the cytoplasm. It catalyses the reaction sn-glycerol 3-phosphate + NAD(+) = dihydroxyacetone phosphate + NADH + H(+). Functionally, plays a role in regulating cardiac sodium current. The polypeptide is Glycerol-3-phosphate dehydrogenase 1-like protein (gpd1l) (Xenopus tropicalis (Western clawed frog)).